Here is a 120-residue protein sequence, read N- to C-terminus: Large ribosomal subunit protein bL19 (120 aa).

It belongs to the bacterial ribosomal protein bL19 family.

This protein is located at the 30S-50S ribosomal subunit interface and may play a role in the structure and function of the aminoacyl-tRNA binding site. This chain is Large ribosomal subunit protein bL19, found in Rippkaea orientalis (strain PCC 8801 / RF-1) (Cyanothece sp. (strain PCC 8801)).